A 169-amino-acid polypeptide reads, in one-letter code: Crossover junction endodeoxyribonuclease RuvC (169 aa).

Catalysis depends on residues Asp11, Glu71, and Asp143. 3 residues coordinate Mg(2+): Asp11, Glu71, and Asp143.

The protein belongs to the RuvC family. As to quaternary structure, homodimer which binds Holliday junction (HJ) DNA. The HJ becomes 2-fold symmetrical on binding to RuvC with unstacked arms; it has a different conformation from HJ DNA in complex with RuvA. In the full resolvosome a probable DNA-RuvA(4)-RuvB(12)-RuvC(2) complex forms which resolves the HJ. Mg(2+) serves as cofactor.

It is found in the cytoplasm. It catalyses the reaction Endonucleolytic cleavage at a junction such as a reciprocal single-stranded crossover between two homologous DNA duplexes (Holliday junction).. In terms of biological role, the RuvA-RuvB-RuvC complex processes Holliday junction (HJ) DNA during genetic recombination and DNA repair. Endonuclease that resolves HJ intermediates. Cleaves cruciform DNA by making single-stranded nicks across the HJ at symmetrical positions within the homologous arms, yielding a 5'-phosphate and a 3'-hydroxyl group; requires a central core of homology in the junction. The consensus cleavage sequence is 5'-(A/T)TT(C/G)-3'. Cleavage occurs on the 3'-side of the TT dinucleotide at the point of strand exchange. HJ branch migration catalyzed by RuvA-RuvB allows RuvC to scan DNA until it finds its consensus sequence, where it cleaves and resolves the cruciform DNA. This chain is Crossover junction endodeoxyribonuclease RuvC, found in Bartonella henselae (strain ATCC 49882 / DSM 28221 / CCUG 30454 / Houston 1) (Rochalimaea henselae).